The primary structure comprises 256 residues: Venom allergen-1 (256 aa).

Residues 1–21 form the signal peptide; sequence MAFNGIALLITATIFIGSCYA. Residues 65–211 enclose the SCP domain; that stretch reads LNTHNKLRAE…MINYYLVCNY (147 aa). Asn146 and Asn210 each carry an N-linked (GlcNAc...) asparagine glycan.

It belongs to the CRISP family.

The protein resides in the secreted. In terms of biological role, activates autophagy in human monocytic cells, dendritic cells and macrophages. Functionally, (Microbial infection) Promotes Zika virus replication in human dendritic cells and macrophages. Facilitates Zika virus transmission from infected mosquitoes to the host in mouse model. This Aedes albopictus (Asian tiger mosquito) protein is Venom allergen-1.